The following is a 637-amino-acid chain: Extracellular metalloproteinase MEP (637 aa).

A signal peptide spans 1 to 21; the sequence is MRSVDSLLLLGLTGLASQANA. A propeptide spanning residues 22-246 is cleaved from the precursor; sequence HPAKRQPNDS…VVGVVDYVAD (225 aa). The N-linked (GlcNAc...) asparagine glycan is linked to Asn288. His431 is a Zn(2+) binding site. Glu432 is a catalytic residue. A Zn(2+)-binding site is contributed by His435.

The protein belongs to the peptidase M36 family. Zn(2+) is required as a cofactor.

The protein localises to the secreted. Functionally, secreted metalloproteinase that probably acts as a virulence factor. Cleaves Z.mays Endochitinase A (CHIA) between residues 'Gly-29' and 'Cys-30'. This chain is Extracellular metalloproteinase MEP (MEP), found in Fusarium vanettenii (strain ATCC MYA-4622 / CBS 123669 / FGSC 9596 / NRRL 45880 / 77-13-4) (Fusarium solani subsp. pisi).